Consider the following 631-residue polypeptide: Polyadenylate-binding protein 3 (631 aa).

4 RRM domains span residues 11–89 (ASLY…WSQR), 99–175 (GNIF…QFKS), 191–268 (PNVY…RAQK), and 294–370 (VNLY…LAQR). Tyr140 is subject to Phosphotyrosine. Position 315 is a phosphoserine (Ser315). N6,N6-dimethyllysine; alternate is present on Lys361. Lys361 is covalently cross-linked (Glycyl lysine isopeptide (Lys-Gly) (interchain with G-Cter in SUMO2); alternate). Position 364 is a phosphotyrosine (Tyr364). An omega-N-methylarginine mark is found at Arg426, Arg430, and Arg449. Arg501 carries the dimethylated arginine modification. Residue Arg513 is modified to Omega-N-methylarginine. The PABC domain occupies 537 to 614 (QETLTASRLA…AVAVLQAHQA (78 aa)).

This sequence belongs to the polyadenylate-binding protein type-1 family. Testis specific.

It localises to the cytoplasm. Its function is as follows. Binds the poly(A) tail of mRNA. May be involved in cytoplasmic regulatory processes of mRNA metabolism. Binds poly(A) with a slightly lower affinity as compared to PABPC1. The chain is Polyadenylate-binding protein 3 (PABPC3) from Homo sapiens (Human).